A 380-amino-acid polypeptide reads, in one-letter code: Apolipoprotein A-IV (380 aa).

The first 20 residues, 1 to 20 (MFLKAVVLSLALVAVTGAEA), serve as a signal peptide directing secretion. 13 tandem repeats follow at residues 33–54 (DYFSQLGNNAKKAVEHIQKSEL), 60–81 (TLFQDKLGEVSTYTDDLQKKLV), 82–103 (PFATELHERLTKDSEKLKEEIR), 115–136 (PHATEVSQKIGDNVRELQQRLG), 137–158 (PYAEELRTQVDTQAQQLRRQLT), 159–180 (PYVERMEKVMRQNLDQLQASLA), 181–202 (PYAEELQATVNQRVEELKGRLT), 203–224 (PYADQLQTKIEENVEELRRSLA), 225–246 (PYAQDVQGKLNHQLEGLAFQMK), 247–268 (KHAEELKAKISAKAEELRQGLV), 269–286 (PLVNSVHGSQLGNAEDLQ), 287–308 (KSLAELSSRLDQQVEDFRRTVG), and 309–330 (PYGETFNKAMVQQLDTLRQKLG). A 13 X 22 AA approximate tandem repeats region spans residues 33–330 (DYFSQLGNNA…QLDTLRQKLG (298 aa)). The segment at 361-380 (KESQAPALPAQEEMPVPLGG) is disordered.

Belongs to the apolipoprotein A1/A4/E family. As to quaternary structure, homodimer. In terms of tissue distribution, secreted in plasma.

Its subcellular location is the secreted. In terms of biological role, may have a role in chylomicrons and VLDL secretion and catabolism. Required for efficient activation of lipoprotein lipase by ApoC-II; potent activator of LCAT. Apoa-IV is a major component of HDL and chylomicrons. The sequence is that of Apolipoprotein A-IV (APOA4) from Bos taurus (Bovine).